Consider the following 58-residue polypeptide: Parvalbumin beta 3 (58 aa).

An N-acetylalanine modification is found at Ala-1. An EF-hand domain is found at 24 to 58; it reads FNYKTFFKFFAIIDQDHSGFIEEEELKALSDAETK. Residues Asp-37, Asp-39, Ser-41, Phe-43, Glu-45, and Glu-48 each contribute to the Ca(2+) site.

It belongs to the parvalbumin family.

In terms of biological role, in muscle, parvalbumin is thought to be involved in relaxation after contraction. It binds two calcium ions. The polypeptide is Parvalbumin beta 3 (Merluccius senegalensis (Senegalese hake)).